The sequence spans 1714 residues: Bifunctional glutamate/proline--tRNA ligase (1714 aa).

The interval 166–191 (DAKVKRSPQSSKEQTPAKTGERKQEG) is disordered. A glutamate--tRNA ligase region spans residues 170–754 (KRSPQSSKEQ…ASELDSQISQ (585 aa)). The span at 172-182 (SPQSSKEQTPA) shows a compositional bias: polar residues. The 'HIGH' region motif lies at 209 to 220 (PPEASGYLHIGH). The 'KMSKS' region motif lies at 438 to 442 (VLSKR). 3 disordered regions span residues 718-754 (PTSGLKVNAPDAKATKKASSPVSSSGQASELDSQISQ), 791-817 (GKDWKPGQTSASSAPVPAASSSSANDA), and 943-962 (GTTAPAPAAAPVKVKQEKNP). Low complexity-rich tracts occupy residues 734-746 (KASSPVSSSGQAS) and 800-817 (SASSAPVPAASSSSANDA). WHEP-TRS domains are found at residues 744-800 (QASE…GQTS), 816-872 (DAVS…GTVP), 890-946 (SVAQ…GTTA), 969-1025 (TVNT…GTVA), and 1044-1100 (DVGS…DAKS). Residues 755–1201 (QGDLVRDLKS…KPAKPVKKEP (447 aa)) form a 6 X 57 AA approximate repeats region. Disordered regions lie at residues 1093–1119 (DWTPDAKSEPAVVKKEASPVSMASPAK) and 1168–1210 (FPVA…GAVK). A compositionally biased stretch (basic and acidic residues) spans 1094 to 1109 (WTPDAKSEPAVVKKEA). Serine 1110 bears the Phosphoserine mark. One can recognise a WHEP-TRS 6 domain in the interval 1118 to 1174 (AKDELTQEINAQGEKVRAAKGNKAAKEVIDAEVAKLLALKAKYKEVTGTDFPVAGRG). Residues 1172-1181 (GRGGGGGGGS) show a composition bias toward gly residues. The tract at residues 1207 to 1714 (GAVKKQTRLG…KFYTLFGRSY (508 aa)) is proline--tRNA ligase. L-proline is bound by residues 1322 to 1324 (TSE) and arginine 1353. ATP contacts are provided by arginine 1353, glutamate 1355, arginine 1364, threonine 1365, glutamine 1438, and threonine 1441. Glutamine 1438 is a binding site for Mg(2+). L-proline is bound at residue histidine 1443. Positions 1476 and 1478 each coordinate ATP. Positions 1648, 1653, and 1695 each coordinate Zn(2+).

This sequence in the N-terminal section; belongs to the class-I aminoacyl-tRNA synthetase family. Glutamate--tRNA ligase type 2 subfamily. The protein in the C-terminal section; belongs to the class-II aminoacyl-tRNA synthetase family. As to quaternary structure, component of the multisynthetase complex which is comprised of a bifunctional glutamyl-prolyl-tRNA synthetase, the monospecific isoleucyl, leucyl, glutaminyl, methionyl, lysyl, arginyl, and aspartyl-tRNA synthetases as well as three auxiliary proteins, p18, p48 and p43.

The catalysed reaction is tRNA(Glu) + L-glutamate + ATP = L-glutamyl-tRNA(Glu) + AMP + diphosphate. It catalyses the reaction tRNA(Pro) + L-proline + ATP = L-prolyl-tRNA(Pro) + AMP + diphosphate. Functionally, catalyzes the attachment of both L-glutamate and L-proline to their cognate tRNAs in a two-step reaction where the amino acid is first activated by ATP to form a covalent intermediate with AMP. Subsequently, the activated amino acid is transferred to the acceptor end of the cognate tRNA to form L-glutamyl-tRNA(Glu) and L-prolyl-tRNA(Pro). The protein is Bifunctional glutamate/proline--tRNA ligase of Drosophila melanogaster (Fruit fly).